Here is a 413-residue protein sequence, read N- to C-terminus: Protein PHR1-LIKE 1 (413 aa).

Disordered stretches follow at residues 171–196 (SEPN…TPFL) and 208–233 (QQQM…SKQR). Composition is skewed to polar residues over residues 181 to 191 (DSSSHNPNSEI) and 208 to 231 (QQQM…ATSK). One can recognise an HTH myb-type domain in the interval 228 to 288 (ATSKQRMRWT…HLQKYRTARY (61 aa)). The segment at residues 259–284 (PKAVLKLLNNPGLTIYHVKSHLQKYR) is a DNA-binding region (H-T-H motif). Residues 322–342 (TQALRLQMEVQKRLHEQLEIQ) are coiled coil. An LHEQLE motif is present at residues 335-340 (LHEQLE). A disordered region spans residues 363-413 (QQKIQDNKSSSSEASPKQCNGSFAEVEVGLETLTGDQNESASASRKRVRED). Polar residues-rich tracts occupy residues 369–383 (NKSS…QCNG) and 396–405 (TGDQNESASA).

It belongs to the MYB-CC family. As to quaternary structure, homodimers and heterodimers. Interacts with MED25. Does not interact with PHL2 or PHL3. In terms of tissue distribution, expressed in shoots and roots.

The protein resides in the nucleus. In terms of biological role, transcription factor acting as central integrator of phosphate starvation responses. Regulates FER1 expression upon phosphate starvation, linking iron and phosphate homeostasis. This is Protein PHR1-LIKE 1 (PHL1) from Arabidopsis thaliana (Mouse-ear cress).